A 1140-amino-acid chain; its full sequence is Protein FAM184A (1140 aa).

Coiled-coil stretches lie at residues 57–256, 296–800, and 868–907; these read ALNT…NKAQ, AILR…IEME, and RITDLQEELRHREHHISELDKEVQHLHENISALTKELEFK. The segment at 1063–1128 is disordered; the sequence is PNLSALESGG…EASPVASPDP (66 aa).

This sequence belongs to the FAM184 family.

The protein resides in the cytoplasm. The protein localises to the P-body. It is found in the cytoskeleton. It localises to the microtubule organizing center. Its subcellular location is the centrosome. The protein resides in the centriolar satellite. This Homo sapiens (Human) protein is Protein FAM184A.